A 120-amino-acid chain; its full sequence is UPF0295 protein Exig_0660 (120 aa).

The next 2 membrane-spanning stretches (helical) occupy residues 16–36 and 41–61; these read AMFL…LKQF and VILM…YFLI.

It belongs to the UPF0295 family.

The protein localises to the cell membrane. In Exiguobacterium sibiricum (strain DSM 17290 / CCUG 55495 / CIP 109462 / JCM 13490 / 255-15), this protein is UPF0295 protein Exig_0660.